The sequence spans 430 residues: Trigger factor (430 aa).

The region spanning 163–248 (GNIAIIDFKG…IKDIKVKELP (86 aa)) is the PPIase FKBP-type domain.

This sequence belongs to the FKBP-type PPIase family. Tig subfamily.

The protein localises to the cytoplasm. The enzyme catalyses [protein]-peptidylproline (omega=180) = [protein]-peptidylproline (omega=0). Involved in protein export. Acts as a chaperone by maintaining the newly synthesized protein in an open conformation. Functions as a peptidyl-prolyl cis-trans isomerase. The chain is Trigger factor from Clostridium botulinum (strain Langeland / NCTC 10281 / Type F).